A 239-amino-acid polypeptide reads, in one-letter code: Probable transcriptional regulatory protein Bcer98_0465 (239 aa).

Belongs to the TACO1 family. YeeN subfamily.

The protein resides in the cytoplasm. The chain is Probable transcriptional regulatory protein Bcer98_0465 from Bacillus cytotoxicus (strain DSM 22905 / CIP 110041 / 391-98 / NVH 391-98).